Here is a 430-residue protein sequence, read N- to C-terminus: tRNA pseudouridine synthase Pus10 (430 aa).

D253 (nucleophile) is an active-site residue. Residues Y320 and Y392 each coordinate substrate.

The protein belongs to the pseudouridine synthase Pus10 family.

The enzyme catalyses uridine(54) in tRNA = pseudouridine(54) in tRNA. The catalysed reaction is uridine(55) in tRNA = pseudouridine(55) in tRNA. Responsible for synthesis of pseudouridine from uracil-54 and uracil-55 in the psi GC loop of transfer RNAs. The protein is tRNA pseudouridine synthase Pus10 of Ignisphaera aggregans (strain DSM 17230 / JCM 13409 / AQ1.S1).